We begin with the raw amino-acid sequence, 415 residues long: Zona pellucida-like domain-containing protein 1 (415 aa).

Residues 1–19 form the signal peptide; that stretch reads MERVWLLFLLAIRVSPGSA. Topologically, residues 20-373 are extracellular; the sequence is QFNSYNCDAN…PFQLNAVTSS (354 aa). The region spanning 43–320 is the ZP domain; the sequence is YCGVQAITMK…PICGNRKRRD (278 aa). Cystine bridges form between Cys44/Cys155 and Cys79/Cys104. Residue Asn164 is glycosylated (N-linked (GlcNAc...) asparagine). 2 disulfides stabilise this stretch: Cys235–Cys296 and Cys255–Cys313. Residues 374 to 394 traverse the membrane as a helical segment; that stretch reads LISGMVILGVLCFSLLLCSLA. Residues 395–415 lie on the Cytoplasmic side of the membrane; sequence LLHRKGSTSLVLNGVRNPVFE.

Proteolytically cleaved before the transmembrane segment to yield the secreted form found in the extracellular matrix of the cupula.

It localises to the cytoplasmic vesicle membrane. The protein resides in the secreted. Its subcellular location is the extracellular space. The protein localises to the extracellular matrix. Its function is as follows. Glycoprotein which is a component of the gelatinous extracellular matrix in the cupulae of the vestibular organ. In Mus musculus (Mouse), this protein is Zona pellucida-like domain-containing protein 1 (Zpld1).